The following is a 326-amino-acid chain: Phenylalanine--tRNA ligase alpha subunit (326 aa).

Residue Glu-251 participates in Mg(2+) binding.

It belongs to the class-II aminoacyl-tRNA synthetase family. Phe-tRNA synthetase alpha subunit type 1 subfamily. As to quaternary structure, tetramer of two alpha and two beta subunits. Mg(2+) is required as a cofactor.

Its subcellular location is the cytoplasm. The catalysed reaction is tRNA(Phe) + L-phenylalanine + ATP = L-phenylalanyl-tRNA(Phe) + AMP + diphosphate + H(+). The protein is Phenylalanine--tRNA ligase alpha subunit of Alteromonas mediterranea (strain DSM 17117 / CIP 110805 / LMG 28347 / Deep ecotype).